The sequence spans 450 residues: ATP-dependent protease ATPase subunit HslU (450 aa).

ATP-binding positions include Val-29, 71-76 (GVGKTE), Asp-261, Glu-328, and Arg-400.

This sequence belongs to the ClpX chaperone family. HslU subfamily. As to quaternary structure, a double ring-shaped homohexamer of HslV is capped on each side by a ring-shaped HslU homohexamer. The assembly of the HslU/HslV complex is dependent on binding of ATP.

It is found in the cytoplasm. In terms of biological role, ATPase subunit of a proteasome-like degradation complex; this subunit has chaperone activity. The binding of ATP and its subsequent hydrolysis by HslU are essential for unfolding of protein substrates subsequently hydrolyzed by HslV. HslU recognizes the N-terminal part of its protein substrates and unfolds these before they are guided to HslV for hydrolysis. The chain is ATP-dependent protease ATPase subunit HslU from Rickettsia felis (strain ATCC VR-1525 / URRWXCal2) (Rickettsia azadi).